Here is a 274-residue protein sequence, read N- to C-terminus: NH(3)-dependent NAD(+) synthetase (274 aa).

Position 46–53 (46–53 (GISGGQDS)) interacts with ATP. Aspartate 52 lines the Mg(2+) pocket. Residue arginine 140 coordinates deamido-NAD(+). Threonine 160 contributes to the ATP binding site. Position 165 (glutamate 165) interacts with Mg(2+). 2 residues coordinate deamido-NAD(+): lysine 173 and aspartate 180. ATP contacts are provided by lysine 189 and threonine 211. Deamido-NAD(+) is bound at residue 260 to 261 (HK).

This sequence belongs to the NAD synthetase family. In terms of assembly, homodimer.

The catalysed reaction is deamido-NAD(+) + NH4(+) + ATP = AMP + diphosphate + NAD(+) + H(+). Its pathway is cofactor biosynthesis; NAD(+) biosynthesis; NAD(+) from deamido-NAD(+) (ammonia route): step 1/1. Its function is as follows. Catalyzes the ATP-dependent amidation of deamido-NAD to form NAD. Uses ammonia as a nitrogen source. The sequence is that of NH(3)-dependent NAD(+) synthetase from Lactococcus lactis subsp. cremoris (strain SK11).